Reading from the N-terminus, the 702-residue chain is MPRQIELDKVRNIGIIAHIDAGKTTTTERILFYTGRTYKIGEVHEGTATMDWMPQEQERGITITAAATTAPWRLDGVEYRINIIDTPGHVDFTVEVERSLRVLDGGVVVFDGVAGVEPQSETVWRQADKYNVPRICFVNKMDRVGASFERCVQMIKDRLGAKPAIVQLPIGVEDSFRGTIDLFKMKATVYYDDLGKDIREEEIPAELRPAAEQARNELIEMIAETDDELTLLYLEGQELTVEELKRGLRKATIERKLVPVLCGAALRNKGVQKLLDAVVEYLPSPLDRPAITGTLPGQVMGDEGVEVITRPVSDDAPFTALVFKIVADPYVGKLAYFRVYAGKITKGSYVLNSTRNQRERLGRILRMHANHREDIEEVYAGEIAAMVGPKNSYTGDTICDPDHPIVLESIRFPEPVIELAVEPKTKADQDKMSIALSRLAEEDPTFRVYTDPETGQTIIKGMGELHLEVILDRMRREYKVEANQGKPQVSYRETITIPVDQETRFVRQTGGKGQYGHVKIKFEPLPPGSGFEFVNAIVGGVIPKEYIPAVEQGLREAMQTGVIAGYPVVDVKATLYDGSYHEVDSSEMAFKIAASMCLKDAVRRGKPQLLEPIMKVETVTPEEFLGTVIGDFNSRRGRIEGMEARGNAQVVRAFVPLANMFGYMTDLRSATQGRATSSMEFDHYEPLPEALAKEIIEKRSAN.

Residues 8–286 enclose the tr-type G domain; the sequence is DKVRNIGIIA…AVVEYLPSPL (279 aa). Residues 17–24, 85–89, and 139–142 each bind GTP; these read AHIDAGKT, DTPGH, and NKMD.

The protein belongs to the TRAFAC class translation factor GTPase superfamily. Classic translation factor GTPase family. EF-G/EF-2 subfamily.

It is found in the cytoplasm. Its function is as follows. Catalyzes the GTP-dependent ribosomal translocation step during translation elongation. During this step, the ribosome changes from the pre-translocational (PRE) to the post-translocational (POST) state as the newly formed A-site-bound peptidyl-tRNA and P-site-bound deacylated tRNA move to the P and E sites, respectively. Catalyzes the coordinated movement of the two tRNA molecules, the mRNA and conformational changes in the ribosome. The sequence is that of Elongation factor G from Chloroflexus aurantiacus (strain ATCC 29366 / DSM 635 / J-10-fl).